The chain runs to 401 residues: Nodulation protein E (401 aa).

One can recognise a Ketosynthase family 3 (KS3) domain in the interval D2 to Q400. Residues C161, H293, and H330 each act as for beta-ketoacyl synthase activity in the active site. A helical membrane pass occupies residues H328–I347.

This sequence belongs to the thiolase-like superfamily. Beta-ketoacyl-ACP synthases family.

Its subcellular location is the cell inner membrane. Its function is as follows. Proposed to synthesize NOD factor fatty acyl chain. Involved in the synthesis of a highly unsaturated fatty acid moiety, which forms part of a lipo-oligosaccharide that is responsible for host specificity. This is Nodulation protein E (nodE) from Rhizobium meliloti (Ensifer meliloti).